The sequence spans 1392 residues: MNYSFTEKKRIRKSFAKRENVLEVPFLLATQIDSYAKFLQLENAFDKRTDDGLQAAFNSIFPIVSHNGYARLEFVHYTLGEPLFDIPECQLRGITYAAPLRARIRLVILDKEASKPTVKEVRENEVYMGEIPLMTPSGSFVINGTERVIVSQLHRSPGVFFEHDKGKTHSSGKLLFSARIIPYRGSWLDFEFDPKDLLYFRIDRRRKMPVTILLKALGYNNEQILDIFYDKETFYLSSNGVQTDLVADRLKGETAKVDILDKEGNVLVAKGKRITAKNIRDITNAGLTRLDVEPESLLGKALAADLIDSETGEVLASANDEITEELLAKFDINGVKEITTLYINELDQGAYISNTLRTDETAGRQAARVAIYRMMRPGEPPTEEAVEQLFNRLFFSEDSYDLSRVGRMKFNTRTYEQKLSEAQQNSWYGRLLNETFAGAADKGGYVLSVEDIVASIATLVELRNGHGEVDDIDHLGNRRVRSVGELTENQFRSGLARVERAVKERLNQAESENLMPHDLINAKPVSAAIKEFFGSSQLSQFMDQTNPLSEVTHKRRVSALGPGGLTRERAGFEVRDVHPTHYGRVCPIETPEGPNIGLINSLSVYARTNDYGFLETPYRRVIDGKVTEEIDYLSAIEEGRYVIAQANADLDSDGNLIGDLVTCREKGETIMATPDRVQYMDVATGQVVSVAASLIPFLEHDDANRALMGANMQRQAVPCLRPEKPMVGTGIERSVAVDSATAIVARRGGVVEYVDANRVVIRVHDDEATAGEVGVDIYNLVKFTRSNQSTNINQRPAVKAGDVLQRGDLVADGASTDFGELALGQNMTIAFMPWNGYNYEDSILISEKVAADDRYTSIHIEELNVVARDTKLGAEDITRDIPNLSERMQNRLDESGIVYIGAEVEAGDVLVGKVTPKGETQLTPEEKLLRAIFGEKASDVKDTSLRMPTGMSGTVIDVQVFTREGIQRDKRAQSIIDSELKRYRLDLNDQLRIFDNDAFDRIERMIVGQKANGGPMKLAKGSEITTEYLAGLPSRHDWFDIRLTDEDLAKQLELIKVSLQQKREEADELYEIKKKKLTQGDELQPGVQKMVKVFIAIKRRLQAGDKMAGRHGNKGVVSRILPVEDMPYMADGRPVDIVLNPLGVPSRMNIGQILEVHLGWAAKGIGERIDRMLKEQRKAGELREFLNRLYNGSGKKEDLDALTDEEIIELASNLRKGASFASPVFDGAKESEIREMLNLAYPSDDPEVEKLGFNDSKTQITLYDGRSGEAFDRKVTVGVMHYLKLHHLVDEKMHARSTGPYSLVTQQPLGGKAQFGGQRFGEMEVWALEAYGAAYTLQEMLTVKSDDVNGRTKMYENIVKGEHKIDAGMPESFNVLVKEIRSLGLDIDLERY.

It belongs to the RNA polymerase beta chain family. The RNAP catalytic core consists of 2 alpha, 1 beta, 1 beta' and 1 omega subunit. When a sigma factor is associated with the core the holoenzyme is formed, which can initiate transcription.

It carries out the reaction RNA(n) + a ribonucleoside 5'-triphosphate = RNA(n+1) + diphosphate. Functionally, DNA-dependent RNA polymerase catalyzes the transcription of DNA into RNA using the four ribonucleoside triphosphates as substrates. In Neisseria meningitidis serogroup B (strain ATCC BAA-335 / MC58), this protein is DNA-directed RNA polymerase subunit beta.